A 264-amino-acid polypeptide reads, in one-letter code: Indole-3-glycerol phosphate synthase (264 aa).

Belongs to the TrpC family.

It catalyses the reaction 1-(2-carboxyphenylamino)-1-deoxy-D-ribulose 5-phosphate + H(+) = (1S,2R)-1-C-(indol-3-yl)glycerol 3-phosphate + CO2 + H2O. Its pathway is amino-acid biosynthesis; L-tryptophan biosynthesis; L-tryptophan from chorismate: step 4/5. This Azoarcus sp. (strain BH72) protein is Indole-3-glycerol phosphate synthase.